The chain runs to 455 residues: Oxysterols receptor LXR-beta (455 aa).

Residues 1 to 10 (MSTPTTNSVD) show a composition bias toward polar residues. Positions 1-53 (MSTPTTNSVDTPLPGNGPSTPSSSPGGKEDGPEPCPGGADPDVPSTDGADSAS) are disordered. A transactivation AF-1; required for ligand-independent transactivation function region spans residues 1 to 80 (MSTPTTNSVD…GPAPKMLGDE (80 aa)). Over residues 14-26 (PGNGPSTPSSSPG) the composition is skewed to low complexity. The segment at residues 79–156 (DELCQVCGDT…AGMREQCVLS (78 aa)) is a DNA-binding region (nuclear receptor). NR C4-type zinc fingers lie at residues 82–102 (CQVC…CEGC) and 120–144 (CRGG…LRKC). The segment at 164–210 (KIRKQQQQQQQQSSPTGPGVSSSSPASGPGASPGGSDGGGQGSGEGE) is disordered. Residues 168–193 (QQQQQQQQSSPTGPGVSSSSPASGPG) are compositionally biased toward low complexity. Over residues 194–210 (ASPGGSDGGGQGSGEGE) the composition is skewed to gly residues. The segment at 214–455 (LTAAQELMIQ…LLSEIWDVHE (242 aa)) is transactivation AF-2; required for ligand-dependent transactivation function; mediates interaction with CCAR2. The 239-residue stretch at 217-455 (AQELMIQQLV…LLSEIWDVHE (239 aa)) folds into the NR LBD domain. Residues lysine 404 and lysine 442 each participate in a glycyl lysine isopeptide (Lys-Gly) (interchain with G-Cter in SUMO2) cross-link.

It belongs to the nuclear hormone receptor family. NR1 subfamily. As to quaternary structure, forms a heterodimer with RXR. Interacts with CCAR2 (via N-terminus) in a ligand-independent manner. Interacts (when sumoylated) with GPS2; interaction with GPS2 onto hepatic acute phase protein promoters prevents N-Cor corepressor complex dissociation. Interacts with ABCA12 and ABCA1; this interaction is required for ABCA1 localization to the cell surface and is necessary for its normal activity and stability. Sumoylated by SUMO2 at Lys-404 and Lys-442 during the hepatic acute phase response, leading to promote interaction with GPS2 and prevent N-Cor corepressor complex dissociation.

It is found in the nucleus. Its function is as follows. Nuclear receptor that exhibits a ligand-dependent transcriptional activation activity. Binds preferentially to double-stranded oligonucleotide direct repeats having the consensus half-site sequence 5'-AGGTCA-3' and 4-nt spacing (DR-4). Regulates cholesterol uptake through MYLIP-dependent ubiquitination of LDLR, VLDLR and LRP8; DLDLR and LRP8. Interplays functionally with RORA for the regulation of genes involved in liver metabolism. Induces LPCAT3-dependent phospholipid remodeling in endoplasmic reticulum (ER) membranes of hepatocytes, driving SREBF1 processing and lipogenesis. Via LPCAT3, triggers the incorporation of arachidonate into phosphatidylcholines of ER membranes, increasing membrane dynamics and enabling triacylglycerols transfer to nascent very low-density lipoprotein (VLDL) particles. Via LPCAT3 also counteracts lipid-induced ER stress response and inflammation, likely by modulating SRC kinase membrane compartmentalization and limiting the synthesis of lipid inflammatory mediators. Plays an anti-inflammatory role during the hepatic acute phase response by acting as a corepressor: inhibits the hepatic acute phase response by preventing dissociation of the N-Cor corepressor complex. This is Oxysterols receptor LXR-beta (NR1H2) from Bos taurus (Bovine).